Consider the following 159-residue polypeptide: Transcription elongation factor GreA (159 aa).

Belongs to the GreA/GreB family.

Functionally, necessary for efficient RNA polymerase transcription elongation past template-encoded arresting sites. The arresting sites in DNA have the property of trapping a certain fraction of elongating RNA polymerases that pass through, resulting in locked ternary complexes. Cleavage of the nascent transcript by cleavage factors such as GreA or GreB allows the resumption of elongation from the new 3'terminus. GreA releases sequences of 2 to 3 nucleotides. The polypeptide is Transcription elongation factor GreA (Buchnera aphidicola subsp. Cinara cedri (strain Cc)).